We begin with the raw amino-acid sequence, 407 residues long: Aminomethyltransferase, mitochondrial (407 aa).

Residues 1-29 (MRGGLWQLGQSITRRLGQSDKKTIVRRCY) constitute a mitochondrion transit peptide. The substrate site is built by E234, R265, and Y403.

Belongs to the GcvT family. As to quaternary structure, the glycine cleavage system is composed of four proteins: P, T, L and H.

It localises to the mitochondrion. It carries out the reaction N(6)-[(R)-S(8)-aminomethyldihydrolipoyl]-L-lysyl-[protein] + (6S)-5,6,7,8-tetrahydrofolate = N(6)-[(R)-dihydrolipoyl]-L-lysyl-[protein] + (6R)-5,10-methylene-5,6,7,8-tetrahydrofolate + NH4(+). The glycine cleavage system catalyzes the degradation of glycine. The polypeptide is Aminomethyltransferase, mitochondrial (GDCST) (Flaveria anomala (Yellowtops)).